The primary structure comprises 377 residues: Guanine nucleotide-binding protein subunit beta-1 (377 aa).

WD repeat units lie at residues 63-93 (GHTG…IVWN), 105-135 (LPCA…SIFN), 154-185 (GHKG…VLWD), 202-233 (GHTA…RLWD), 246-276 (GHEG…RLFD), 293-323 (GDIP…YVWD), and 339-369 (SHEG…KIWA).

The protein belongs to the WD repeat G protein beta family. In terms of assembly, g proteins are composed of 3 units, alpha, beta and gamma.

Its function is as follows. Guanine nucleotide-binding proteins (G proteins) are involved as a modulator or transducer in various transmembrane signaling systems. The beta and gamma chains are required for the GTPase activity, for replacement of GDP by GTP, and for G protein-effector interaction. This Nicotiana tabacum (Common tobacco) protein is Guanine nucleotide-binding protein subunit beta-1.